Consider the following 367-residue polypeptide: MKLSDFDFDLPTELIAQYPASERDNSDLLIATTPPIKTKFYNIIDYLKEGDLLVFNNSKVIKAKLNLERNITINLNQKLSDDSWSAFAKPARKLNIGDEFYSDNHKVIITEKFAMGEIKVKFELDNISVFEFLDKYGEMPLPVYIRRSKRHGEEEESSDEAISSQNPEIATESKRTPSNDDKLDSLRYQTIYSQIEGSVAAPTAGLHFTKEILDKLKAKGVQIAFVTLHVGAGTFLPVKTENIHEHKIHTEYCSITPETAEIINKAKQERRRIIAVGTTTLRTLESSCNNGVVKAGSFETDIFITPGFKFQTTDMLLTNFHFPKSTLFMLICAFAGFKEMHELYKYAIKEKMRFFSYGDATVLYRKV.

The interval arginine 150–lysine 182 is disordered. The segment covering threonine 171–lysine 182 has biased composition (basic and acidic residues).

This sequence belongs to the QueA family. As to quaternary structure, monomer.

The protein localises to the cytoplasm. The catalysed reaction is 7-aminomethyl-7-carbaguanosine(34) in tRNA + S-adenosyl-L-methionine = epoxyqueuosine(34) in tRNA + adenine + L-methionine + 2 H(+). It participates in tRNA modification; tRNA-queuosine biosynthesis. Transfers and isomerizes the ribose moiety from AdoMet to the 7-aminomethyl group of 7-deazaguanine (preQ1-tRNA) to give epoxyqueuosine (oQ-tRNA). The chain is S-adenosylmethionine:tRNA ribosyltransferase-isomerase from Rickettsia felis (strain ATCC VR-1525 / URRWXCal2) (Rickettsia azadi).